Here is a 171-residue protein sequence, read N- to C-terminus: Secretion monitor (171 aa).

An N-terminal signal peptide occupies residues 1-30 (MIGILNRWRQFGRRYFWPHLLLGMVAASLG).

Belongs to the SecM family.

It localises to the cytoplasm. It is found in the cytosol. The protein localises to the periplasm. Functionally, regulates secA expression by translational coupling of the secM secA operon. Translational pausing at a specific Pro residue 5 residues before the end of the protein may allow disruption of a mRNA repressor helix that normally suppresses secA translation initiation. The protein is Secretion monitor of Pectobacterium atrosepticum (strain SCRI 1043 / ATCC BAA-672) (Erwinia carotovora subsp. atroseptica).